The primary structure comprises 4646 residues: Cytoplasmic dynein 1 heavy chain 1 (4646 aa).

At serine 2 the chain carries N-acetylserine. The tract at residues 53–1867 (EAALEEKSAL…SIQMANAKFN (1815 aa)) is stem. Serine 70 carries the phosphoserine modification. 3 coiled-coil regions span residues 181–202 (SVEK…NIEI), 455–478 (AHRK…QLRA), and 543–566 (TEAW…RITA). The interaction with DYNC1I2 stretch occupies residues 448–703 (MVWRINPAHR…NTQEIFDDWA (256 aa)). The interaction with DYNC1LI2 stretch occupies residues 651 to 802 (AKQIDRQLTA…EKVEERNTIS (152 aa)). At lysine 1125 the chain carries N6-acetyllysine. Coiled-coil stretches lie at residues 1171 to 1252 (TYVQ…AVES) and 1357 to 1373 (RKLR…LKSF). Serine 1230 is modified (phosphoserine). 4 AAA regions span residues 1868 to 2099 (YGFE…VLVS), 2180 to 2452 (EELK…LTRL), 2556 to 2805 (EVET…WVRG), and 2899 to 3168 (VFYE…GGRT). ATP-binding positions include 1906–1913 (GPAGTGKT) and 2224–2231 (GPSGSGKS). Residues 2390–2411 (GEDEAQRRRKGKEDEGEEAASP) are disordered. ATP contacts are provided by residues 2595 to 2602 (GPPGSGKT) and 2937 to 2944 (GVSGAGKT). Coiled-coil stretches lie at residues 3189–3275 (EKRS…ADKQ), 3396–3500 (AIAQ…KNQM), and 3737–3800 (EFQL…VSQQ). Positions 3189-3500 (EKRSELEEQQ…KTSETFKNQM (312 aa)) are stalk. Lysine 3480 is subject to N6-acetyllysine. AAA stretches follow at residues 3553 to 3782 (LSNA…EVTR) and 4005 to 4221 (AHMF…TVDT). Serine 4162 carries the post-translational modification Phosphoserine. At lysine 4283 the chain carries N6-acetyllysine. Threonine 4366 carries the phosphothreonine modification. Phosphoserine is present on serine 4368.

Belongs to the dynein heavy chain family. Homodimer. The cytoplasmic dynein 1 complex consists of two catalytic heavy chains (HCs) and a number of non-catalytic subunits presented by intermediate chains (ICs), light intermediate chains (LICs) and light chains (LCs); the composition seems to vary in respect to the IC, LIC and LC composition. The heavy chain homodimer serves as a scaffold for the probable homodimeric assembly of the respective non-catalytic subunits. The ICs and LICs bind directly to the HC dimer and dynein LCs assemble on the IC dimer. Interacts with DYNC1LI1; DYNC1LI1 and DYNC1LI2 bind mutually exclusive to DYNC1H1. Interacts with DYNC1LI2; DYNC1LI1 and DYNC1LI2 bind mutually exclusive to DYNC1H1. Interacts with DYNC1I2. Interacts with BICD2. Interacts with isoform 2 of CRACR2A. Interacts with DNALI1.

It localises to the cytoplasm. Its subcellular location is the cytoskeleton. Cytoplasmic dynein 1 acts as a motor for the intracellular retrograde motility of vesicles and organelles along microtubules. Dynein has ATPase activity; the force-producing power stroke is thought to occur on release of ADP. Plays a role in mitotic spindle assembly and metaphase plate congression. This is Cytoplasmic dynein 1 heavy chain 1 from Homo sapiens (Human).